Reading from the N-terminus, the 326-residue chain is Aspartate carbamoyltransferase catalytic subunit (326 aa).

2 residues coordinate carbamoyl phosphate: Arg65 and Thr66. Lys93 contributes to the L-aspartate binding site. Residues Arg115, His143, and Gln146 each coordinate carbamoyl phosphate. Residues Arg176 and Arg230 each coordinate L-aspartate. Carbamoyl phosphate is bound by residues Gly271 and Pro272.

Belongs to the aspartate/ornithine carbamoyltransferase superfamily. ATCase family. Heterododecamer (2C3:3R2) of six catalytic PyrB chains organized as two trimers (C3), and six regulatory PyrI chains organized as three dimers (R2).

It carries out the reaction carbamoyl phosphate + L-aspartate = N-carbamoyl-L-aspartate + phosphate + H(+). It participates in pyrimidine metabolism; UMP biosynthesis via de novo pathway; (S)-dihydroorotate from bicarbonate: step 2/3. Catalyzes the condensation of carbamoyl phosphate and aspartate to form carbamoyl aspartate and inorganic phosphate, the committed step in the de novo pyrimidine nucleotide biosynthesis pathway. The sequence is that of Aspartate carbamoyltransferase catalytic subunit from Mesorhizobium japonicum (strain LMG 29417 / CECT 9101 / MAFF 303099) (Mesorhizobium loti (strain MAFF 303099)).